The primary structure comprises 412 residues: Phosphoglycerate kinase (412 aa).

Substrate is bound by residues 26-28 (DFN), Arg42, 65-68 (HLGR), Arg133, and Arg166. ATP-binding positions include Lys217, Gly308, Glu339, and 368–371 (GGDS).

This sequence belongs to the phosphoglycerate kinase family. As to quaternary structure, monomer.

The protein localises to the cytoplasm. The enzyme catalyses (2R)-3-phosphoglycerate + ATP = (2R)-3-phospho-glyceroyl phosphate + ADP. It functions in the pathway carbohydrate degradation; glycolysis; pyruvate from D-glyceraldehyde 3-phosphate: step 2/5. The chain is Phosphoglycerate kinase from Synechococcus sp. (strain JA-2-3B'a(2-13)) (Cyanobacteria bacterium Yellowstone B-Prime).